The chain runs to 417 residues: uncharacterized protein (417 aa).

Transmembrane regions (helical) follow at residues M1–S21, V32–G52, V96–M116, L168–A188, V192–A212, I261–F281, L286–T306, A351–G371, and V392–L412.

It belongs to the concentrative nucleoside transporter (CNT) (TC 2.A.41) family.

It is found in the cell inner membrane. This is an uncharacterized protein from Haemophilus influenzae (strain ATCC 51907 / DSM 11121 / KW20 / Rd).